The sequence spans 123 residues: Hydrogenase maturation factor HypA (123 aa).

A Ni(2+)-binding site is contributed by H2. Positions 77, 80, 96, and 99 each coordinate Zn(2+).

The protein belongs to the HypA/HybF family.

Its function is as follows. Involved in the maturation of [NiFe] hydrogenases. Required for nickel insertion into the metal center of the hydrogenase. This chain is Hydrogenase maturation factor HypA, found in Methanococcus aeolicus (strain ATCC BAA-1280 / DSM 17508 / OCM 812 / Nankai-3).